Here is a 334-residue protein sequence, read N- to C-terminus: MDYTVVWLAAGISFLVTLVLGPVTIPLLQRLKFGQTIRAEGPAAHMAKTGTPTMGGIMFLIGIAVAGAVLLVSNIPGRAEGLVVLAVTLGYGLIGFLDDFIKVVLKRNLGLKAREKILGQLVFATVLAVVAVFKLGRGTDYIIPFSSGISFDLGWWPFFFLTLFVLLGTSNGVNLTDGLDGLASGATVFTATAFAILALVTGKIGLAIVLAAVVGGCLGFLFYNRHPAKVFMGDTGSLALGGALGAGAVVTRNELLLVVIGGLYVLETLSVIIQVISFKTTGRRVFRMSPLHHHFELSGWSERKVVRNFWLLSFLFSLVGLLGAQDFWLWLSNR.

Transmembrane regions (helical) follow at residues 5–25 (VVWL…PVTI), 52–72 (PTMG…VLLV), 81–101 (GLVV…DDFI), 116–136 (KILG…FKLG), 148–168 (GISF…VLLG), 181–200 (GLAS…LALV), 230–250 (VFMG…GAVV), 256–276 (LLVV…IQVI), and 309–329 (FWLL…DFWL).

This sequence belongs to the glycosyltransferase 4 family. MraY subfamily. Mg(2+) is required as a cofactor.

Its subcellular location is the cell membrane. The enzyme catalyses UDP-N-acetyl-alpha-D-muramoyl-L-alanyl-gamma-D-glutamyl-meso-2,6-diaminopimeloyl-D-alanyl-D-alanine + di-trans,octa-cis-undecaprenyl phosphate = di-trans,octa-cis-undecaprenyl diphospho-N-acetyl-alpha-D-muramoyl-L-alanyl-D-glutamyl-meso-2,6-diaminopimeloyl-D-alanyl-D-alanine + UMP. The protein operates within cell wall biogenesis; peptidoglycan biosynthesis. In terms of biological role, catalyzes the initial step of the lipid cycle reactions in the biosynthesis of the cell wall peptidoglycan: transfers peptidoglycan precursor phospho-MurNAc-pentapeptide from UDP-MurNAc-pentapeptide onto the lipid carrier undecaprenyl phosphate, yielding undecaprenyl-pyrophosphoryl-MurNAc-pentapeptide, known as lipid I. The sequence is that of Phospho-N-acetylmuramoyl-pentapeptide-transferase from Desulforamulus reducens (strain ATCC BAA-1160 / DSM 100696 / MI-1) (Desulfotomaculum reducens).